The following is a 91-amino-acid chain: Cytochrome c-554(547) (91 aa).

Heme c is bound by residues cysteine 15, cysteine 18, histidine 19, and methionine 64.

As to quaternary structure, monomer. Post-translationally, binds 1 heme c group covalently per subunit.

The chain is Cytochrome c-554(547) from Halothiobacillus neapolitanus (Thiobacillus neapolitanus).